Reading from the N-terminus, the 591-residue chain is L-lactate dehydrogenase (cytochrome) (591 aa).

The N-terminal 80 residues, 1-80, are a transit peptide targeting the mitochondrion; sequence MLKYKPLLKI…LNWHNGQIDN (80 aa). The region spanning 88–165 is the Cytochrome b5 heme-binding domain; it reads KQKISPAEVA…APEKKLGPLQ (78 aa). Heme b-binding residues include His-123, His-146, Tyr-177, Gln-219, and Tyr-223. Residues 197–563 enclose the FMN hydroxy acid dehydrogenase domain; sequence PPLDNIINLY…KPDLLDLSTL (367 aa). Tyr-223 contributes to the pyruvate binding site. Residues 275–278, Ser-308, and Gln-332 contribute to the FMN site; that span reads SATA. Tyr-334 is a pyruvate binding site. Residue Thr-360 coordinates FMN. Position 376 (Lys-376) interacts with heme b. An FMN-binding site is contributed by Lys-429. Pyruvate contacts are provided by His-453 and Arg-456. His-453 (proton acceptor) is an active-site residue. Residues 489-493 and 512-513 contribute to the FMN site; these read DGGVR and GR.

In the N-terminal section; belongs to the cytochrome b5 family. It in the C-terminal section; belongs to the FMN-dependent alpha-hydroxy acid dehydrogenase family. As to quaternary structure, homotetramer. FMN serves as cofactor. The cofactor is heme b.

The protein resides in the mitochondrion intermembrane space. The catalysed reaction is (S)-lactate + 2 Fe(III)-[cytochrome c] = 2 Fe(II)-[cytochrome c] + pyruvate + 2 H(+). In terms of biological role, catalyzes the oxidation of (S)-lactate (L-lactate) to pyruvate with subsequent transfer of electrons to cytochrome c. Is involved in the utilization of (S)-lactate as a sole source of carbon for growth. Can also use ferricyanide as an electron acceptor in vitro. The polypeptide is L-lactate dehydrogenase (cytochrome) (CYB2) (Saccharomyces cerevisiae (strain ATCC 204508 / S288c) (Baker's yeast)).